A 105-amino-acid chain; its full sequence is DNA-directed RNA polymerase subunit omega (105 aa).

This sequence belongs to the RNA polymerase subunit omega family. As to quaternary structure, the RNAP catalytic core consists of 2 alpha, 1 beta, 1 beta' and 1 omega subunit. When a sigma factor is associated with the core the holoenzyme is formed, which can initiate transcription.

It carries out the reaction RNA(n) + a ribonucleoside 5'-triphosphate = RNA(n+1) + diphosphate. Functionally, promotes RNA polymerase assembly. Latches the N- and C-terminal regions of the beta' subunit thereby facilitating its interaction with the beta and alpha subunits. This Streptococcus equi subsp. equi (strain 4047) protein is DNA-directed RNA polymerase subunit omega.